The chain runs to 100 residues: NADH-quinone oxidoreductase subunit K (100 aa).

3 helical membrane-spanning segments follow: residues 4–24, 29–49, and 60–80; these read TSYY…GVLI, LVLF…LVTF, and IVVF…LALL.

It belongs to the complex I subunit 4L family. NDH-1 is composed of 14 different subunits. Subunits NuoA, H, J, K, L, M, N constitute the membrane sector of the complex.

Its subcellular location is the cell membrane. It carries out the reaction a quinone + NADH + 5 H(+)(in) = a quinol + NAD(+) + 4 H(+)(out). Functionally, NDH-1 shuttles electrons from NADH, via FMN and iron-sulfur (Fe-S) centers, to quinones in the respiratory chain. The immediate electron acceptor for the enzyme in this species is believed to be ubiquinone. Couples the redox reaction to proton translocation (for every two electrons transferred, four hydrogen ions are translocated across the cytoplasmic membrane), and thus conserves the redox energy in a proton gradient. This chain is NADH-quinone oxidoreductase subunit K, found in Roseiflexus sp. (strain RS-1).